A 364-amino-acid polypeptide reads, in one-letter code: DNA polymerase IV (364 aa).

The 185-residue stretch at isoleucine 14–glycine 198 folds into the UmuC domain. Mg(2+) contacts are provided by aspartate 18 and aspartate 116. The active site involves glutamate 117.

Belongs to the DNA polymerase type-Y family. In terms of assembly, monomer. Mg(2+) is required as a cofactor.

The protein resides in the cytoplasm. It catalyses the reaction DNA(n) + a 2'-deoxyribonucleoside 5'-triphosphate = DNA(n+1) + diphosphate. Poorly processive, error-prone DNA polymerase involved in untargeted mutagenesis. Copies undamaged DNA at stalled replication forks, which arise in vivo from mismatched or misaligned primer ends. These misaligned primers can be extended by PolIV. Exhibits no 3'-5' exonuclease (proofreading) activity. May be involved in translesional synthesis, in conjunction with the beta clamp from PolIII. The sequence is that of DNA polymerase IV from Lactococcus lactis subsp. cremoris (strain MG1363).